The sequence spans 170 residues: CDP-archaeol synthase (170 aa).

A run of 5 helical transmembrane segments spans residues 9–29 (AFWY…LGGG), 53–73 (GFFG…FLLP), 79–99 (LGIA…GDLI), 114–134 (PAVG…AYPV), and 140–160 (GEVL…NIFA).

It belongs to the CDP-archaeol synthase family. Requires Mg(2+) as cofactor.

The protein localises to the cell membrane. The enzyme catalyses 2,3-bis-O-(geranylgeranyl)-sn-glycerol 1-phosphate + CTP + H(+) = CDP-2,3-bis-O-(geranylgeranyl)-sn-glycerol + diphosphate. The protein operates within membrane lipid metabolism; glycerophospholipid metabolism. Its function is as follows. Catalyzes the formation of CDP-2,3-bis-(O-geranylgeranyl)-sn-glycerol (CDP-archaeol) from 2,3-bis-(O-geranylgeranyl)-sn-glycerol 1-phosphate (DGGGP) and CTP. This reaction is the third ether-bond-formation step in the biosynthesis of archaeal membrane lipids. This Pyrococcus horikoshii (strain ATCC 700860 / DSM 12428 / JCM 9974 / NBRC 100139 / OT-3) protein is CDP-archaeol synthase.